Here is a 97-residue protein sequence, read N- to C-terminus: Biogenesis of lysosome-related organelles complex 1 subunit SNN1 (97 aa).

Residues 45-97 (VVRLKQIRNLLKEEQEYYNEEEGLGVERERLEELELRVEKLTQKYKKLLADCV) are a coiled coil.

The protein belongs to the SNAPIN family. In terms of assembly, component of the biogenesis of lysosome-related organelles complex-1 (BLOC-1).

It is found in the endosome. Its function is as follows. Component of the biogenesis of lysosome-related organelles complex-1 (BLOC-1), a complex involved in endosomal cargo sorting. The chain is Biogenesis of lysosome-related organelles complex 1 subunit SNN1 (SNN1) from Lachancea thermotolerans (strain ATCC 56472 / CBS 6340 / NRRL Y-8284) (Yeast).